The primary structure comprises 346 residues: Dihydroorotase (346 aa).

His14 and His16 together coordinate Zn(2+). Residues 16–18 (HLR) and Asn42 each bind substrate. Lys100, His137, and His175 together coordinate Zn(2+). Lys100 bears the N6-carboxylysine mark. His137 provides a ligand contact to substrate. Leu220 serves as a coordination point for substrate. Position 248 (Asp248) interacts with Zn(2+). The active site involves Asp248. His252 and Ala264 together coordinate substrate.

The protein belongs to the metallo-dependent hydrolases superfamily. DHOase family. Class II DHOase subfamily. Homodimer. Zn(2+) serves as cofactor.

The enzyme catalyses (S)-dihydroorotate + H2O = N-carbamoyl-L-aspartate + H(+). It functions in the pathway pyrimidine metabolism; UMP biosynthesis via de novo pathway; (S)-dihydroorotate from bicarbonate: step 3/3. Functionally, catalyzes the reversible cyclization of carbamoyl aspartate to dihydroorotate. In Novosphingobium aromaticivorans (strain ATCC 700278 / DSM 12444 / CCUG 56034 / CIP 105152 / NBRC 16084 / F199), this protein is Dihydroorotase.